We begin with the raw amino-acid sequence, 232 residues long: MPSQQKKIIFCMAGVLSFLCALGVVTAVGTPLWVKATILCKTGALLVNASGKELDKFMGEMQYGLFHGEGVRQCGLGARPFRFSFFPDLVQAIPVSIHINIILFSMILVVLTMVGTAFFMYNAFGKPFETLHGPLGLYLVSFISGSCGCLVMILFASEVKVHRLSEKIANFKEGTYAYRTQNENYTTSFWVVFICFFVHFLNGLLIRLAGFQFPFTKSKETETTNVASDLMY.

Residues 8–28 (IIFCMAGVLSFLCALGVVTAV) form a helical membrane-spanning segment. N-linked (GlcNAc...) asparagine glycosylation occurs at asparagine 48. 2 consecutive transmembrane segments (helical) span residues 101–121 (IILF…FFMY) and 135–155 (LGLY…MILF). N-linked (GlcNAc...) asparagine glycosylation is present at asparagine 184. The chain crosses the membrane as a helical span at residues 186–206 (TTSFWVVFICFFVHFLNGLLI).

This sequence belongs to the clarin family.

The protein resides in the cell membrane. In terms of biological role, may have a role in the excitatory ribbon synapse junctions between hair cells and cochlear ganglion cells and presumably also in analogous synapses within the retina. This Mus musculus (Mouse) protein is Clarin-1 (Clrn1).